Here is a 472-residue protein sequence, read N- to C-terminus: Cysteine--tRNA ligase (472 aa).

Cys27 serves as a coordination point for Zn(2+). Positions 29-39 match the 'HIGH' region motif; that stretch reads PTVYNLIHIGN. Residues Cys214, His239, and Glu243 each contribute to the Zn(2+) site. Positions 271–275 match the 'KMSKS' region motif; sequence KMSKS. Lys274 contributes to the ATP binding site.

Belongs to the class-I aminoacyl-tRNA synthetase family. As to quaternary structure, monomer. Zn(2+) is required as a cofactor.

Its subcellular location is the cytoplasm. The enzyme catalyses tRNA(Cys) + L-cysteine + ATP = L-cysteinyl-tRNA(Cys) + AMP + diphosphate. This Lachnospira eligens (strain ATCC 27750 / DSM 3376 / VPI C15-48 / C15-B4) (Eubacterium eligens) protein is Cysteine--tRNA ligase.